The chain runs to 111 residues: Glucosamine 6-phosphate N-acetyltransferase (111 aa).

One can recognise an N-acetyltransferase domain in the interval 1 to 111 (MKKDFHSTYY…MKKYASHSII (111 aa)). Substrate contacts are provided by residues 33-36 (KFLR) and 45-47 (EEV). Residues 47-49 (VIV) and 55-60 (RKAIGK) contribute to the acetyl-CoA site. Residues 76-77 (YK) and D81 each bind substrate. Position 90 to 92 (90 to 92 (YEK)) interacts with acetyl-CoA.

The protein belongs to the acetyltransferase family. GNA1 subfamily.

The enzyme catalyses D-glucosamine 6-phosphate + acetyl-CoA = N-acetyl-D-glucosamine 6-phosphate + CoA + H(+). It participates in nucleotide-sugar biosynthesis; UDP-N-acetyl-alpha-D-glucosamine biosynthesis; N-acetyl-alpha-D-glucosamine 1-phosphate from alpha-D-glucosamine 6-phosphate (route I): step 1/2. This Schizosaccharomyces pombe (strain 972 / ATCC 24843) (Fission yeast) protein is Glucosamine 6-phosphate N-acetyltransferase (gna1).